The primary structure comprises 1525 residues: Multidrug resistance protein mrp-7 (1525 aa).

The Extracellular portion of the chain corresponds to 1 to 24 (MLSSFCGDGHPFSTGLPNVSICAQ). N18 is a glycosylation site (N-linked (GlcNAc...) asparagine). A helical transmembrane segment spans residues 25–45 (HTVLVWVPAAFFLLTLPFLSA). Topologically, residues 46–66 (QCHLTAQRFARLPFSAHFIIK) are cytoplasmic. The chain crosses the membrane as a helical span at residues 67-87 (LLLVAFLAANSLATWCYVLFS). The Extracellular portion of the chain corresponds to 88 to 94 (KNSYAAA). Residues 95 to 115 (YYVYPGLWVLVWTGTFLVHLI) form a helical membrane-spanning segment. At 116–118 (RLR) the chain is on the cytoplasmic side. A helical transmembrane segment spans residues 119–139 (CGLVSSGIQHVTSLIFLLCGA). Residues 140-165 (PEFYQWIRMENSNSFPNDLTTTDSAQ) lie on the Extracellular side of the membrane. A helical membrane pass occupies residues 166 to 186 (FLSIAYLSWYSALILYTFSLC). Topologically, residues 187–346 (FADPRGAKTD…APFWKGMALS (160 aa)) are cytoplasmic. The region spanning 305–587 (LLASTLKFVS…IALLINQAVQ (283 aa)) is the ABC transmembrane type-1 1 domain. The chain crosses the membrane as a helical span at residues 347–367 (ILMFSVSELRSLILNGYFYIM). Topologically, residues 368–434 (FRMGTKIQTS…SCPYQITFAL (67 aa)) are extracellular. Residues 435–455 (VYLFITLGYSALPGVVIMVIF) traverse the membrane as a helical segment. Over 456 to 535 (VPMNIISSMI…NILDSFNTAS (80 aa)) the chain is Cytoplasmic. The helical transmembrane segment at 536–556 (PFLVALFSFGTFVLSNPSHLL) threads the bilayer. The Extracellular segment spans residues 557 to 561 (TPQIA). Residues 562–582 (FVSLALFNQLRSPMTMIALLI) form a helical membrane-spanning segment. Topologically, residues 583–953 (NQAVQAVVSN…ATYQLYVKAA (371 aa)) are cytoplasmic. One can recognise an ABC transporter 1 domain in the interval 622 to 849 (VRVENLTASW…RGLFFDFMEE (228 aa)). 659 to 666 (GKVGSGKS) contributes to the ATP binding site. Positions 900–925 (ELTTQISTMSSPEKPPTGTSPAAATE) are disordered. A helical transmembrane segment spans residues 954 to 974 (GYLLSIAFIGFFIVYMTLQIL). One can recognise an ABC transmembrane type-1 2 domain in the interval 959–1245 (IAFIGFFIVY…AVRQVSEIEA (287 aa)). Residues 975–1005 (RSFWLSAWSDEYDPDSPSAHPMAKGWRLGVY) lie on the Extracellular side of the membrane. Residues 1006-1026 (GALGFSETACFFVALLALVFV) traverse the membrane as a helical segment. Residues 1027 to 1068 (GQRASKNLHGPLIHNLMRSPMSFYDTTPLGRILNRCAKDIET) lie on the Cytoplasmic side of the membrane. Residues 1069–1089 (IDMMLPMNFRYLVMCVLQVAF) form a helical membrane-spanning segment. Residue T1090 is a topological domain, extracellular. Residues 1091–1111 (LIVIIISTPLFAVVILPLALI) form a helical membrane-spanning segment. At 1112–1184 (YLIFLRYYVP…RYSSLVSNRW (73 aa)) the chain is on the cytoplasmic side. The chain crosses the membrane as a helical span at residues 1185–1205 (LAVRLEFVGNCIIFFAALFAV). Topologically, residues 1206–1525 (LSKEFGWITS…ADAAEQDKHE (320 aa)) are extracellular. N1228 carries an N-linked (GlcNAc...) asparagine glycan. Residues 1282 to 1516 (VKFDGYSTRY…KNSAFAKMVA (235 aa)) enclose the ABC transporter 2 domain. An ATP-binding site is contributed by 1316–1323 (GRTGAGKS). N1358 and N1418 each carry an N-linked (GlcNAc...) asparagine glycan.

The protein belongs to the ABC transporter superfamily. ABCC family. Conjugate transporter (TC 3.A.1.208) subfamily. As to expression, expressed in head neurons, including the dopamine (DA) motor neuron, and other cells in the body.

The protein resides in the cell membrane. Functionally, negatively regulates cellular toxicity by mediating the export of environmental toxicants such as methylmercury out of the cell. Plays a role in inhibiting methylmercury-induced dopamine (DA) motor neuron degeneration. Not involved in Mn(2+)- or Al(3+)-associated toxicity. The polypeptide is Multidrug resistance protein mrp-7 (Caenorhabditis elegans).